Consider the following 239-residue polypeptide: MATPHINAEMGDFADVVLMPGDPLRAKHIAETFLEDVREVNNVRGMLGFTGTYKGRKISVMGHGMGIPSCSIYTKELITDFGVKKIIRVGSCGAVREDVKLRDVVIGMGACTDSKVNRLRFKDHDFAAIADFGMVRNAVDAAKALGVDARVGNIFSADLFYTPDPSMFDVMEKYGILGVEMEAAGIYGVAAEFGAKALTICTVSDHIRTHEQTTAAERQTTFNDMIKIALESVLLGDKE.

His-5 provides a ligand contact to a purine D-ribonucleoside. Phosphate is bound by residues Gly-21, Arg-25, Arg-44, and 88–91 (RVGS). A purine D-ribonucleoside contacts are provided by residues 180–182 (EME) and 204–205 (SD). Catalysis depends on Asp-205, which acts as the Proton donor.

This sequence belongs to the PNP/UDP phosphorylase family. Homohexamer; trimer of homodimers.

The enzyme catalyses a purine D-ribonucleoside + phosphate = a purine nucleobase + alpha-D-ribose 1-phosphate. The catalysed reaction is a purine 2'-deoxy-D-ribonucleoside + phosphate = a purine nucleobase + 2-deoxy-alpha-D-ribose 1-phosphate. Functionally, catalyzes the reversible phosphorolytic breakdown of the N-glycosidic bond in the beta-(deoxy)ribonucleoside molecules, with the formation of the corresponding free purine bases and pentose-1-phosphate. The polypeptide is Purine nucleoside phosphorylase DeoD-type (Klebsiella pneumoniae (strain 342)).